The primary structure comprises 858 residues: MFGFLFKKIFGSKNDRYLRRLRSQVQSINALEPQMQELADEDFAARILQYKKAVQEDGQSLDALLPEVFALVREASRRVLGMRHYDMQLIGGMVLHKGKIAEMKTGEGKTLVATLPVVLNALSGKGVHVVTVNDYLAKRDAAWMGQLYGFLGLSTGVIVHGLDDDERKQQYESDITYGTNNEFGFDYLRDNMKFYGHQLVQRGHNYAIVDEVDSILIDEARTPLIISGASDESVGMYRIVDEVVCKLRPEHYTVDEKARTAMLTDEGVAYCEEMLKLDNLFDPANITAQHHVLQSLKAHQVFKRDVDYIVQDDQVVIVDEFTGRLMAGRRYSDGLHQALEAKEGVTIAAENQTLASITFQNYFRLYDKLSGMTGTADTEAVEFHQIYNLEVISIPPNRPMQRKDYPDLIYRSRQEKFDAIVEAITELHKNRQPVLVGTISIETSEMLSHRLSKLGVPHNVLNAKQHEKEAEIVAQAGQPGKVTIATNMAGRGTDIVLGEGVVDLGGLHILGTERHESRRIDNQLRGRSGRQGDPGSSRFYLSLEDDLMRLFGSDRIKGLMEKLGLRDGEAIENAMVTRAVEGAQKRVEAHHFEVRKTLLDYDNVMNQQREVIYALRRELMVEEDLDPVMDEFMNDVLDDVYSTLDGVPVDDHNGLREAAFARLRDVFNLDRVLPENAHLPEREECEPLIRKVLEELRSETGDSYRDIQRYFMLEELDRCWKEHLRNMDALRDGIGLRGYGQRDPKLEYKREGFEMFQAMLFQIRENVFRALSRVRVAPAETAPVEAIEIAPETEEAQGQPLAREYRHKEDRGQLSYSGGGNAEDARNTPAKAAPRIGRNDPCPCGSGRKYKKCCGADK.

ATP-binding positions include Gln-88, 106 to 110 (GEGKT), and Asp-494. The segment at 808-848 (KEDRGQLSYSGGGNAEDARNTPAKAAPRIGRNDPCPCGSGR) is disordered. Positions 842, 844, 853, and 854 each coordinate Zn(2+).

The protein belongs to the SecA family. As to quaternary structure, monomer and homodimer. Part of the essential Sec protein translocation apparatus which comprises SecA, SecYEG and auxiliary proteins SecDF-YajC and YidC. The cofactor is Zn(2+).

The protein localises to the cell inner membrane. Its subcellular location is the cytoplasm. The catalysed reaction is ATP + H2O + cellular proteinSide 1 = ADP + phosphate + cellular proteinSide 2.. Part of the Sec protein translocase complex. Interacts with the SecYEG preprotein conducting channel. Has a central role in coupling the hydrolysis of ATP to the transfer of proteins into and across the cell membrane, serving as an ATP-driven molecular motor driving the stepwise translocation of polypeptide chains across the membrane. In Desulfovibrio desulfuricans (strain ATCC 27774 / DSM 6949 / MB), this protein is Protein translocase subunit SecA.